Reading from the N-terminus, the 159-residue chain is Endoribonuclease YbeY (159 aa).

Residues His126, His130, and His136 each contribute to the Zn(2+) site.

The protein belongs to the endoribonuclease YbeY family. Zn(2+) is required as a cofactor.

It localises to the cytoplasm. Single strand-specific metallo-endoribonuclease involved in late-stage 70S ribosome quality control and in maturation of the 3' terminus of the 16S rRNA. The protein is Endoribonuclease YbeY of Thermodesulfovibrio yellowstonii (strain ATCC 51303 / DSM 11347 / YP87).